The primary structure comprises 227 residues: ATP phosphoribosyltransferase (227 aa).

Belongs to the ATP phosphoribosyltransferase family. Short subfamily. In terms of assembly, heteromultimer composed of HisG and HisZ subunits.

It is found in the cytoplasm. The enzyme catalyses 1-(5-phospho-beta-D-ribosyl)-ATP + diphosphate = 5-phospho-alpha-D-ribose 1-diphosphate + ATP. The protein operates within amino-acid biosynthesis; L-histidine biosynthesis; L-histidine from 5-phospho-alpha-D-ribose 1-diphosphate: step 1/9. Its function is as follows. Catalyzes the condensation of ATP and 5-phosphoribose 1-diphosphate to form N'-(5'-phosphoribosyl)-ATP (PR-ATP). Has a crucial role in the pathway because the rate of histidine biosynthesis seems to be controlled primarily by regulation of HisG enzymatic activity. The chain is ATP phosphoribosyltransferase from Rhodospirillum rubrum (strain ATCC 11170 / ATH 1.1.1 / DSM 467 / LMG 4362 / NCIMB 8255 / S1).